Consider the following 279-residue polypeptide: MNIENKEITSSWFTNLRDLLCKEFEKIEEEYAQTKGLKPAKFVRSSWQRNGGGGGVMSLMKGAVFEKVGVNISTVFGKISPEFRNEIPGAELDGKFFATGISLVAHLKSPLIPAMHFNTRYIETSKSWFGGGGDLTPFYPEKNETVKFHAAFKEVCDKYDSSYYPKFKKQCDEYFYLKHRKEPRGVGGIFYDYLNNGNFEQDFAFTQDVGKTLLSVYPEIVRSKLFLPWTAEQKEYQLIRRGRYVEFNLLYDRGTKFGLMTDGNVEAILMSLPPEVKFN.

Ser102 contacts substrate. Residues His106 and His116 each contribute to the a divalent metal cation site. Residue His116 is the Proton donor of the active site. 118 to 120 is a binding site for substrate; it reads NTR. Residues His149 and His179 each coordinate a divalent metal cation. The tract at residues 244-279 is important for dimerization; the sequence is YVEFNLLYDRGTKFGLMTDGNVEAILMSLPPEVKFN.

It belongs to the aerobic coproporphyrinogen-III oxidase family. As to quaternary structure, homodimer. It depends on a divalent metal cation as a cofactor.

The protein localises to the cytoplasm. It catalyses the reaction coproporphyrinogen III + O2 + 2 H(+) = protoporphyrinogen IX + 2 CO2 + 2 H2O. Its pathway is porphyrin-containing compound metabolism; protoporphyrin-IX biosynthesis; protoporphyrinogen-IX from coproporphyrinogen-III (O2 route): step 1/1. Its function is as follows. Involved in the heme biosynthesis. Catalyzes the aerobic oxidative decarboxylation of propionate groups of rings A and B of coproporphyrinogen-III to yield the vinyl groups in protoporphyrinogen-IX. The sequence is that of Oxygen-dependent coproporphyrinogen-III oxidase from Rickettsia rickettsii (strain Iowa).